The following is a 615-amino-acid chain: UvrABC system protein C (615 aa).

The GIY-YIG domain occupies 12-91; it reads EKPGVYIMKD…IKKYKPKYNV (80 aa). In terms of domain architecture, UVR spans 203-238; it reads DWLIQKLKEDMKKAAEELRFEEAARIRDQIFAIERT.

Belongs to the UvrC family. As to quaternary structure, interacts with UvrB in an incision complex.

It localises to the cytoplasm. Functionally, the UvrABC repair system catalyzes the recognition and processing of DNA lesions. UvrC both incises the 5' and 3' sides of the lesion. The N-terminal half is responsible for the 3' incision and the C-terminal half is responsible for the 5' incision. This is UvrABC system protein C from Thermoanaerobacter sp. (strain X514).